Reading from the N-terminus, the 428-residue chain is Phosphomethylpyrimidine synthase 2 (428 aa).

Substrate contacts are provided by residues Met94, Tyr123, His162, 184–186 (SRG), 225–228 (NGMR), and Glu264. Residue His268 participates in Zn(2+) binding. A substrate-binding site is contributed by Tyr291. His332 is a Zn(2+) binding site. Residues Cys408, Cys411, and Cys415 each coordinate [4Fe-4S] cluster.

Belongs to the ThiC family. It depends on [4Fe-4S] cluster as a cofactor.

The enzyme catalyses 5-amino-1-(5-phospho-beta-D-ribosyl)imidazole + S-adenosyl-L-methionine = 4-amino-2-methyl-5-(phosphooxymethyl)pyrimidine + CO + 5'-deoxyadenosine + formate + L-methionine + 3 H(+). Its pathway is cofactor biosynthesis; thiamine diphosphate biosynthesis. In terms of biological role, catalyzes the synthesis of the hydroxymethylpyrimidine phosphate (HMP-P) moiety of thiamine from aminoimidazole ribotide (AIR) in a radical S-adenosyl-L-methionine (SAM)-dependent reaction. The protein is Phosphomethylpyrimidine synthase 2 of Methanosarcina acetivorans (strain ATCC 35395 / DSM 2834 / JCM 12185 / C2A).